The chain runs to 349 residues: Ribonucleoside-diphosphate reductase small chain (349 aa).

D99, E130, and H133 together coordinate Fe cation. The active site involves Y137. Fe cation is bound by residues E192, E226, and H229.

The protein belongs to the ribonucleoside diphosphate reductase small chain family. In terms of assembly, heterodimer of a large and a small subunit. Requires Fe cation as cofactor.

It carries out the reaction a 2'-deoxyribonucleoside 5'-diphosphate + [thioredoxin]-disulfide + H2O = a ribonucleoside 5'-diphosphate + [thioredoxin]-dithiol. Provides the precursors necessary for DNA synthesis. Catalyzes the biosynthesis of deoxyribonucleotides from the corresponding ribonucleotides. The polypeptide is Ribonucleoside-diphosphate reductase small chain (RNR2) (Plasmodium falciparum (isolate Dd2)).